Reading from the N-terminus, the 291-residue chain is Protein US2 (291 aa).

Gly-2 carries the N-acetylglycine; by host modification. Residues 223 to 281 (NKPRPASSRPHPATHPTQRPCFTCMGRPEIPDEPSWQTGDDDPQNPGPPLAVGDEWPPS) are disordered.

The protein belongs to the herpesviridae HHV-1 US2 protein family. Interacts with host KRT18. Interacts with host MAP3K7; this interaction induces host NF-kappa-B pathway.

It is found in the virion. The protein resides in the host cytoplasm. It localises to the host cell surface. The protein localises to the host nucleus. In terms of biological role, plays a role in the activation of the host NF-kappa-B pathway by interacting with and thus activating the component MAP3K7. The sequence is that of Protein US2 from Human herpesvirus 2 (strain HG52) (HHV-2).